Consider the following 683-residue polypeptide: Probable potassium transport system protein Kup 1 (683 aa).

12 helical membrane-spanning segments follow: residues 13–33 (GLLIAIGIVYGDIGTSPLYVM), 55–75 (ISLVLWTVTLLTTLQTVFIAL), 98–118 (WLVLPALIGGAAILADGTLTP), 139–159 (VPVSTQGTVIAITVVILLLLF), 168–188 (IIGKAFGPIMFIWFTFLGVIG), 218–238 (AGIFILGSIFLATTGAEALYS), 251–271 (SWPYVFVCLSLNYFGQGVWIL), 296–316 (LAAIVLATIAAVIASQALITG), 345–365 (IYIPSVNKMICAATIAIVLFF), 376–396 (GLSITISMLMTTILLYEWLAM), 401–421 (TIWNWLFLIFFGFLDVMFMLA), and 426–446 (FMHGGYVSLVIAGFIGIIMYV).

Belongs to the HAK/KUP transporter (TC 2.A.72) family.

It localises to the cell membrane. The catalysed reaction is K(+)(in) + H(+)(in) = K(+)(out) + H(+)(out). In terms of biological role, transport of potassium into the cell. Likely operates as a K(+):H(+) symporter. The chain is Probable potassium transport system protein Kup 1 from Lactobacillus johnsonii (strain CNCM I-12250 / La1 / NCC 533).